Consider the following 207-residue polypeptide: ATP-dependent dethiobiotin synthetase BioD (207 aa).

11 to 16 (DVGKTF) provides a ligand contact to ATP. Thr15 serves as a coordination point for Mg(2+). Residue Lys31 is part of the active site. A substrate-binding site is contributed by Ser35. Residues Asp42, 95 to 98 (ETSG), and 155 to 156 (NQ) each bind ATP. Mg(2+) is bound by residues Asp42 and Glu95.

Belongs to the dethiobiotin synthetase family. Homodimer. It depends on Mg(2+) as a cofactor.

It localises to the cytoplasm. The catalysed reaction is (7R,8S)-7,8-diammoniononanoate + CO2 + ATP = (4R,5S)-dethiobiotin + ADP + phosphate + 3 H(+). Its pathway is cofactor biosynthesis; biotin biosynthesis; biotin from 7,8-diaminononanoate: step 1/2. Catalyzes a mechanistically unusual reaction, the ATP-dependent insertion of CO2 between the N7 and N8 nitrogen atoms of 7,8-diaminopelargonic acid (DAPA, also called 7,8-diammoniononanoate) to form a ureido ring. This Chlamydia abortus (strain DSM 27085 / S26/3) (Chlamydophila abortus) protein is ATP-dependent dethiobiotin synthetase BioD.